The chain runs to 295 residues: Protoheme IX farnesyltransferase (295 aa).

Transmembrane regions (helical) follow at residues 24 to 44, 45 to 65, 94 to 114, 117 to 137, 144 to 164, 171 to 191, 216 to 236, 240 to 260, and 272 to 292; these read IMYLVVFTAVAGMVTAPGSMH, PFLALISLICVALGSGSAGAI, SALEFGITLGILSVFIMAIAV, ISAALLAVSILFYVFIYTIWL, NIVIGGAAGAFPPMIGWAAVT, SFILFLVIFMWTPPHFWALSL, KYILIYSVLLVLTSLLPALFL, LLYLSMATFEGCVFIWYAVSV, and MFSYSISYLFSLFASIIFCSI.

The protein belongs to the UbiA prenyltransferase family. Protoheme IX farnesyltransferase subfamily.

Its subcellular location is the cell membrane. It carries out the reaction heme b + (2E,6E)-farnesyl diphosphate + H2O = Fe(II)-heme o + diphosphate. Its pathway is porphyrin-containing compound metabolism; heme O biosynthesis; heme O from protoheme: step 1/1. Its function is as follows. Converts heme B (protoheme IX) to heme O by substitution of the vinyl group on carbon 2 of heme B porphyrin ring with a hydroxyethyl farnesyl side group. The polypeptide is Protoheme IX farnesyltransferase (Wolbachia pipientis wMel).